The chain runs to 320 residues: ATP-dependent 6-phosphofructokinase (320 aa).

ATP is bound by residues G12, 73–74, and 103–106; these read RF and GDGS. D104 is a Mg(2+) binding site. 126–128 provides a ligand contact to substrate; the sequence is TID. The Proton acceptor role is filled by D128. Residue R155 coordinates ADP. Substrate contacts are provided by residues R163 and 170–172; that span reads MGR. ADP is bound by residues 186-188 and K212; that span reads GCE. Substrate is bound by residues E223, R244, and 250 to 253; that span reads HIQR.

The protein belongs to the phosphofructokinase type A (PFKA) family. ATP-dependent PFK group I subfamily. Prokaryotic clade 'B1' sub-subfamily. As to quaternary structure, homotetramer. The cofactor is Mg(2+).

Its subcellular location is the cytoplasm. The enzyme catalyses beta-D-fructose 6-phosphate + ATP = beta-D-fructose 1,6-bisphosphate + ADP + H(+). Its pathway is carbohydrate degradation; glycolysis; D-glyceraldehyde 3-phosphate and glycerone phosphate from D-glucose: step 3/4. With respect to regulation, allosterically activated by ADP and other diphosphonucleosides, and allosterically inhibited by phosphoenolpyruvate. Functionally, catalyzes the phosphorylation of D-fructose 6-phosphate to fructose 1,6-bisphosphate by ATP, the first committing step of glycolysis. The chain is ATP-dependent 6-phosphofructokinase from Buchnera aphidicola subsp. Cinara cedri (strain Cc).